Reading from the N-terminus, the 819-residue chain is Probable cadmium/zinc-transporting ATPase HMA1, chloroplastic (819 aa).

The transit peptide at 1-17 (MEPATLTRSSSLTRFPY) directs the protein to the chloroplast. Over 18 to 122 (RRGLSTLRLA…IGWVRLANYL (105 aa)) the chain is Stromal. Basic and acidic residues predominate over residues 66–79 (DHHHDHHHDDEQDH). A disordered region spans residues 66 to 87 (DHHHDHHHDDEQDHHNHHHHHH). A helical membrane pass occupies residues 123-144 (REHLHLCCSAAAMFLAAAVCPY). At 145–153 (LAPEPYIKS) the chain is on the lumenal side. The chain crosses the membrane as a helical span at residues 154 to 173 (LQNAFMIVGFPLVGVSASLD). Residues 174-180 (ALMDIAG) are Stromal-facing. The chain crosses the membrane as a helical span at residues 181–201 (GKVNIHVLMALAAFASVFMGN). Position 202 (A202) is a topological domain, lumenal. A helical transmembrane segment spans residues 203 to 223 (LEGGLLLAMFNLAHIAEEFFT). Residues 224–361 (SRSMVDVKEL…KPKLQRWLDE (138 aa)) are Stromal-facing. The helical transmembrane segment at 362–384 (FGENYSKVVVVLSLAIAFLGPFL) threads the bilayer. Residues 385–398 (FKWPFLSTAACRGS) are Lumenal-facing. A helical transmembrane segment spans residues 399–416 (VYRALGLMVAASPCALAV). Over 417–737 (APLAYATAIS…AKSRQTTSLV (321 aa)) the chain is Stromal. D453 functions as the 4-aspartylphosphate intermediate in the catalytic mechanism. Residues E682 and D686 each coordinate Mg(2+). The helical transmembrane segment at 738–757 (KQNVALALTSIFLAALPSVL) threads the bilayer. Topologically, residues 758 to 762 (GFVPL) are lumenal. Residues 763-781 (WLTVLLHEGGTLLVCLNSV) traverse the membrane as a helical segment. At 782–819 (RGLNDPSWSWKQDIVHLINKLRSQEPTSSSSNSLSSAH) the chain is on the stromal side.

This sequence belongs to the cation transport ATPase (P-type) (TC 3.A.3) family. Type IB subfamily.

It localises to the plastid. The protein resides in the chloroplast inner membrane. The catalysed reaction is Zn(2+)(in) + ATP + H2O = Zn(2+)(out) + ADP + phosphate + H(+). It carries out the reaction Cd(2+)(in) + ATP + H2O = Cd(2+)(out) + ADP + phosphate + H(+). Functionally, involved in cadmium/zinc transport. The sequence is that of Probable cadmium/zinc-transporting ATPase HMA1, chloroplastic (HMA1) from Arabidopsis thaliana (Mouse-ear cress).